A 205-amino-acid chain; its full sequence is Histidine biosynthesis bifunctional protein HisIE (205 aa).

The tract at residues 1 to 116 (MLKLKFNEEG…KVEKPLPFEV (116 aa)) is phosphoribosyl-AMP cyclohydrolase. The phosphoribosyl-ATP pyrophosphohydrolase stretch occupies residues 117–205 (LPRLQDVIRE…VMEELIRRFK (89 aa)).

The protein in the N-terminal section; belongs to the PRA-CH family. It in the C-terminal section; belongs to the PRA-PH family.

The protein localises to the cytoplasm. It catalyses the reaction 1-(5-phospho-beta-D-ribosyl)-ATP + H2O = 1-(5-phospho-beta-D-ribosyl)-5'-AMP + diphosphate + H(+). It carries out the reaction 1-(5-phospho-beta-D-ribosyl)-5'-AMP + H2O = 1-(5-phospho-beta-D-ribosyl)-5-[(5-phospho-beta-D-ribosylamino)methylideneamino]imidazole-4-carboxamide. Its pathway is amino-acid biosynthesis; L-histidine biosynthesis; L-histidine from 5-phospho-alpha-D-ribose 1-diphosphate: step 2/9. It functions in the pathway amino-acid biosynthesis; L-histidine biosynthesis; L-histidine from 5-phospho-alpha-D-ribose 1-diphosphate: step 3/9. The sequence is that of Histidine biosynthesis bifunctional protein HisIE (hisI) from Aquifex aeolicus (strain VF5).